The primary structure comprises 491 residues: Glutamyl-tRNA(Gln) amidotransferase subunit A (491 aa).

Catalysis depends on charge relay system residues Lys80 and Ser155. The active-site Acyl-ester intermediate is the Ser179.

The protein belongs to the amidase family. GatA subfamily. Heterotrimer of A, B and C subunits.

The enzyme catalyses L-glutamyl-tRNA(Gln) + L-glutamine + ATP + H2O = L-glutaminyl-tRNA(Gln) + L-glutamate + ADP + phosphate + H(+). Functionally, allows the formation of correctly charged Gln-tRNA(Gln) through the transamidation of misacylated Glu-tRNA(Gln) in organisms which lack glutaminyl-tRNA synthetase. The reaction takes place in the presence of glutamine and ATP through an activated gamma-phospho-Glu-tRNA(Gln). The chain is Glutamyl-tRNA(Gln) amidotransferase subunit A from Salinispora tropica (strain ATCC BAA-916 / DSM 44818 / JCM 13857 / NBRC 105044 / CNB-440).